A 308-amino-acid polypeptide reads, in one-letter code: Protein UL135 (308 aa).

An N-terminal signal peptide occupies residues 1–22 (MVWLWLGVGLLGGTGLASLVLA). Positions 105-274 (KPEFPPARFE…TEPTTLPIVS (170 aa)) are disordered. Over residues 126-145 (SIGRSPSHCSSSSSLSSSAS) the composition is skewed to low complexity. 2 stretches are compositionally biased toward pro residues: residues 152-163 (QPPPSWKPPPPP) and 219-238 (PVTPRPFPKTPTPQKPPRNP).

Belongs to the HCMV UL135 family. As to quaternary structure, interacts with host components of the WAVE2 complex ABI1, NAP1 and WAVE2. Also interacts with host ABI2 and TLN1.

The protein localises to the host cell membrane. The protein resides in the host Golgi apparatus. Its function is as follows. Remodels the host actin cytoskeleton in order to impair immune recognition of infected cells. Mechanistically, interacts with members of the host WAVE2 complex and redirects the complex to the plasma membrane. In turn, the efficiency of immune synapse formation is greatly reduced. This chain is Protein UL135 (UL135), found in Human cytomegalovirus (strain Merlin) (HHV-5).